The sequence spans 154 residues: uncharacterized protein (154 aa).

The disordered stretch occupies residues 104–124 (NNNNNDNDNNNKEKEDNDEKE). Residues 112–124 (NNNKEKEDNDEKE) show a composition bias toward basic and acidic residues.

This is an uncharacterized protein from Dictyostelium discoideum (Social amoeba).